Reading from the N-terminus, the 161-residue chain is Xanthine-guanine phosphoribosyltransferase (161 aa).

Residues 41 to 42 (RG) and 95 to 103 (DDLVDTGNT) contribute to the 5-phospho-alpha-D-ribose 1-diphosphate site. Asp96 provides a ligand contact to Mg(2+). 2 residues coordinate guanine: Asp99 and Ile142. Residues Asp99 and Ile142 each coordinate xanthine. GMP-binding positions include 99 to 103 (DTGNT) and 141 to 142 (WI).

This sequence belongs to the purine/pyrimidine phosphoribosyltransferase family. XGPT subfamily. Homotetramer. Requires Mg(2+) as cofactor.

The protein resides in the cell inner membrane. The catalysed reaction is GMP + diphosphate = guanine + 5-phospho-alpha-D-ribose 1-diphosphate. It catalyses the reaction XMP + diphosphate = xanthine + 5-phospho-alpha-D-ribose 1-diphosphate. It carries out the reaction IMP + diphosphate = hypoxanthine + 5-phospho-alpha-D-ribose 1-diphosphate. It participates in purine metabolism; GMP biosynthesis via salvage pathway; GMP from guanine: step 1/1. Its pathway is purine metabolism; XMP biosynthesis via salvage pathway; XMP from xanthine: step 1/1. Purine salvage pathway enzyme that catalyzes the transfer of the ribosyl-5-phosphate group from 5-phospho-alpha-D-ribose 1-diphosphate (PRPP) to the N9 position of the 6-oxopurines guanine and xanthine to form the corresponding ribonucleotides GMP (guanosine 5'-monophosphate) and XMP (xanthosine 5'-monophosphate), with the release of PPi. To a lesser extent, also acts on hypoxanthine. The sequence is that of Xanthine-guanine phosphoribosyltransferase from Idiomarina loihiensis (strain ATCC BAA-735 / DSM 15497 / L2-TR).